The sequence spans 336 residues: Thiamine thiazole synthase (336 aa).

Residues A89, 110 to 111, G118, and C183 each bind substrate; that span reads ES. A 2,3-didehydroalanine (Cys) modification is found at C219. Substrate is bound by residues D221, H236, M288, and 298 to 300; that span reads RMG.

Belongs to the THI4 family. Homooctamer. Requires Fe cation as cofactor. During the catalytic reaction, a sulfide is transferred from Cys-219 to a reaction intermediate, generating a dehydroalanine residue.

The protein localises to the cytoplasm. The protein resides in the nucleus. It catalyses the reaction [ADP-thiazole synthase]-L-cysteine + glycine + NAD(+) = [ADP-thiazole synthase]-dehydroalanine + ADP-5-ethyl-4-methylthiazole-2-carboxylate + nicotinamide + 3 H2O + 2 H(+). Involved in biosynthesis of the thiamine precursor thiazole. Catalyzes the conversion of NAD and glycine to adenosine diphosphate 5-(2-hydroxyethyl)-4-methylthiazole-2-carboxylic acid (ADT), an adenylated thiazole intermediate. The reaction includes an iron-dependent sulfide transfer from a conserved cysteine residue of the protein to a thiazole intermediate. The enzyme can only undergo a single turnover, which suggests it is a suicide enzyme. May have additional roles in adaptation to various stress conditions and in DNA damage tolerance. In Puccinia graminis f. sp. tritici (strain CRL 75-36-700-3 / race SCCL) (Black stem rust fungus), this protein is Thiamine thiazole synthase.